The following is a 256-amino-acid chain: Hydroxypyruvate/pyruvate aldolase (256 aa).

Catalysis depends on His-48, which acts as the Proton acceptor. A divalent metal cation contacts are provided by Glu-152 and Asp-178.

This sequence belongs to the HpcH/HpaI aldolase family. A divalent metal cation is required as a cofactor.

It catalyses the reaction D-glyceraldehyde + pyruvate = 2-dehydro-3-deoxy-L-galactonate. Its function is as follows. Aldolase which can catalyze in vitro the aldolisation reaction between hydroxypyruvate (HPA) or pyruvate (PA) and D-glyceraldehyde (D-GA). The condensation of pyruvate and D-glyceraldehyde produces 2-dehydro-3-deoxy-L-galactonate as the major product. Has weak activity with hydroxypyruvate and D-glyceraldehyde. The sequence is that of Hydroxypyruvate/pyruvate aldolase from Roseobacter denitrificans (strain ATCC 33942 / OCh 114) (Erythrobacter sp. (strain OCh 114)).